The primary structure comprises 208 residues: ATP synthase subunit beta, chloroplastic (208 aa).

The protein belongs to the ATPase alpha/beta chains family. In terms of assembly, F-type ATPases have 2 components, CF(1) - the catalytic core - and CF(0) - the membrane proton channel. CF(1) has five subunits: alpha(3), beta(3), gamma(1), delta(1), epsilon(1). CF(0) has four main subunits: a(1), b(1), b'(1) and c(9-12).

It is found in the plastid. The protein localises to the chloroplast thylakoid membrane. It carries out the reaction ATP + H2O + 4 H(+)(in) = ADP + phosphate + 5 H(+)(out). In terms of biological role, produces ATP from ADP in the presence of a proton gradient across the membrane. The catalytic sites are hosted primarily by the beta subunits. The chain is ATP synthase subunit beta, chloroplastic (atpB) from Lonchitis hirsuta (Tomato fern).